Consider the following 191-residue polypeptide: 3-isopropylmalate dehydratase small subunit (191 aa).

Belongs to the LeuD family. LeuD type 1 subfamily. In terms of assembly, heterodimer of LeuC and LeuD.

It carries out the reaction (2R,3S)-3-isopropylmalate = (2S)-2-isopropylmalate. The protein operates within amino-acid biosynthesis; L-leucine biosynthesis; L-leucine from 3-methyl-2-oxobutanoate: step 2/4. Catalyzes the isomerization between 2-isopropylmalate and 3-isopropylmalate, via the formation of 2-isopropylmaleate. This is 3-isopropylmalate dehydratase small subunit from Anaeromyxobacter dehalogenans (strain 2CP-C).